Here is a 245-residue protein sequence, read N- to C-terminus: Ribonuclease 3 (245 aa).

Positions 19–148 (FKVFQEKIGI…FIGALYLDQG (130 aa)) constitute an RNase III domain. A Mg(2+)-binding site is contributed by Glu-61. Asp-65 is a catalytic residue. Residues Asp-134 and Glu-137 each contribute to the Mg(2+) site. Glu-137 is a catalytic residue. The DRBM domain maps to 174-243 (DYKSQLQELI…AAEALKKLKE (70 aa)).

The protein belongs to the ribonuclease III family. Homodimer. Mg(2+) serves as cofactor.

The protein localises to the cytoplasm. The catalysed reaction is Endonucleolytic cleavage to 5'-phosphomonoester.. Digests double-stranded RNA. Involved in the processing of primary rRNA transcript to yield the immediate precursors to the large and small rRNAs (23S and 16S). Processes some mRNAs, and tRNAs when they are encoded in the rRNA operon. Processes pre-crRNA and tracrRNA of type II CRISPR loci if present in the organism. The polypeptide is Ribonuclease 3 (Bacillus cereus (strain ATCC 14579 / DSM 31 / CCUG 7414 / JCM 2152 / NBRC 15305 / NCIMB 9373 / NCTC 2599 / NRRL B-3711)).